The chain runs to 276 residues: Bis(5'-nucleosyl)-tetraphosphatase, symmetrical (276 aa).

This sequence belongs to the Ap4A hydrolase family.

The enzyme catalyses P(1),P(4)-bis(5'-adenosyl) tetraphosphate + H2O = 2 ADP + 2 H(+). In terms of biological role, hydrolyzes diadenosine 5',5'''-P1,P4-tetraphosphate to yield ADP. In Legionella pneumophila subsp. pneumophila (strain Philadelphia 1 / ATCC 33152 / DSM 7513), this protein is Bis(5'-nucleosyl)-tetraphosphatase, symmetrical.